The following is a 118-amino-acid chain: Small ribosomal subunit protein uS13 (118 aa).

The tract at residues 94-118 (SLPLRGQRTKTNARTRKGPRKPIRK) is disordered.

This sequence belongs to the universal ribosomal protein uS13 family. Part of the 30S ribosomal subunit. Forms a loose heterodimer with protein S19. Forms two bridges to the 50S subunit in the 70S ribosome.

In terms of biological role, located at the top of the head of the 30S subunit, it contacts several helices of the 16S rRNA. In the 70S ribosome it contacts the 23S rRNA (bridge B1a) and protein L5 of the 50S subunit (bridge B1b), connecting the 2 subunits; these bridges are implicated in subunit movement. Contacts the tRNAs in the A and P-sites. The chain is Small ribosomal subunit protein uS13 from Shewanella halifaxensis (strain HAW-EB4).